The chain runs to 373 residues: Ras association domain-containing protein 7 (373 aa).

In terms of domain architecture, Ras-associating spans 6–89 (AAMELKVWVD…VQFVLRRTGP (84 aa)). Positions 122–150 (CEPRKTLTPEPAPSLSRPGPAAPVTPTPG) are disordered. Coiled coils occupy residues 175–227 (WEQE…AAEA) and 248–297 (QERQ…QFIQ). The interval 300–356 (GAALPPPPRPDRGPPGTQGPLPPAREESLLGAPSESHAGAQPRPRGGPHDAELLEVA) is disordered.

As to quaternary structure, interacts with MAP2K7 and GTP-bound NRAS. Post-translationally, polyubiquitinated and degraded by the proteasome upon prolonged stress stimuli.

It localises to the cytoplasm. The protein resides in the cytoskeleton. Its subcellular location is the microtubule organizing center. The protein localises to the centrosome. Its function is as follows. Negatively regulates stress-induced JNK activation and apoptosis by promoting MAP2K7 phosphorylation and inhibiting its ability to activate JNK. Following prolonged stress, anti-apoptotic effect stops because of degradation of RASSF7 protein via the ubiquitin-proteasome pathway. Required for the activation of AURKB and chromosomal congression during mitosis where it stimulates microtubule polymerization. The chain is Ras association domain-containing protein 7 (RASSF7) from Homo sapiens (Human).